The following is a 91-amino-acid chain: Small ribosomal subunit protein uS19 (91 aa).

Belongs to the universal ribosomal protein uS19 family.

Protein S19 forms a complex with S13 that binds strongly to the 16S ribosomal RNA. This Cupriavidus necator (strain ATCC 17699 / DSM 428 / KCTC 22496 / NCIMB 10442 / H16 / Stanier 337) (Ralstonia eutropha) protein is Small ribosomal subunit protein uS19.